The sequence spans 190 residues: MNKVDKEKIQHAVREILEAIGEDPDREGLIETPNRVARMYEEIFSGLSEEPRDHLKVLFADEKHEELVLVKDIPFYSCCEHHLVPFFGKAHIAYLPKGGRLTGLSKLARVIDTLAKRPQLQERITKNAADIIMEELQPYGVLVVVEAEHMCMTMRGVKKPGSKTVTSAVRGIFEKDIASRAEAMSLITMK.

Residues C79, H82, and C151 each contribute to the Zn(2+) site.

This sequence belongs to the GTP cyclohydrolase I family. Toroid-shaped homodecamer, composed of two pentamers of five dimers.

It carries out the reaction GTP + H2O = 7,8-dihydroneopterin 3'-triphosphate + formate + H(+). It functions in the pathway cofactor biosynthesis; 7,8-dihydroneopterin triphosphate biosynthesis; 7,8-dihydroneopterin triphosphate from GTP: step 1/1. The sequence is that of GTP cyclohydrolase 1 from Clostridioides difficile (strain 630) (Peptoclostridium difficile).